The chain runs to 110 residues: Parvalbumin alpha (110 aa).

S2 carries the post-translational modification N-acetylserine. S2, S8, and S24 each carry phosphoserine. EF-hand domains are found at residues 39–74 (KNPDEVKKVFHILDKDKSGFIEEDELGSILKGFSSD) and 78–110 (LSAKETKTLLAAGDKDGDGKIGVEEFSTLVAES). The Ca(2+) site is built by D52, D54, S56, F58, E60, E63, D91, D93, D95, K97, and E102.

In terms of tissue distribution, expressed in the modiolar nerve root (at protein level).

Its function is as follows. In muscle, parvalbumin is thought to be involved in relaxation after contraction. It binds two calcium ions. This is Parvalbumin alpha (Pvalb) from Mus musculus (Mouse).